Here is a 157-residue protein sequence, read N- to C-terminus: Transcription elongation factor GreA (157 aa).

It belongs to the GreA/GreB family.

In terms of biological role, necessary for efficient RNA polymerase transcription elongation past template-encoded arresting sites. The arresting sites in DNA have the property of trapping a certain fraction of elongating RNA polymerases that pass through, resulting in locked ternary complexes. Cleavage of the nascent transcript by cleavage factors such as GreA or GreB allows the resumption of elongation from the new 3'terminus. GreA releases sequences of 2 to 3 nucleotides. In Chelativorans sp. (strain BNC1), this protein is Transcription elongation factor GreA.